The primary structure comprises 367 residues: mRNA-decapping enzyme-like protein (367 aa).

3 disordered regions span residues 144–179, 196–246, and 299–333; these read PKASSSKSEFEELEAKPTMAVMDGPLEPSSTARDAP, NTAS…SSSP, and PNNASHQQRSYGTPVLQPFPPPTPPPSLAPAPTGP. The segment covering 196-211 has biased composition (polar residues); that stretch reads NTASGSASGPYQSSAI. Positions 212 to 234 are enriched in low complexity; it reads PHQPHQPHQPTIAPPVAAAAPPQ. Residues 299–309 show a composition bias toward polar residues; it reads PNNASHQQRSY. Over residues 315–331 the composition is skewed to pro residues; it reads QPFPPPTPPPSLAPAPT.

The protein belongs to the DCP1 family. Homodimer. Component of the decapping complex. Interacts with DCP2 and DCP5. Interacts with BCHA1. As to expression, expressed in seedlings, mostly in root tips, root hairs, and the vascular system. Also present in roots, leaves, stems, and flowers.

Its subcellular location is the cytoplasm. It is found in the P-body. In terms of biological role, as a component of the decapping complex, involved in the degradation of mRNAs. Essential for postembryonic development. The polypeptide is mRNA-decapping enzyme-like protein (Arabidopsis thaliana (Mouse-ear cress)).